The following is a 259-amino-acid chain: UPF0246 protein NGO_0461 (259 aa).

It belongs to the UPF0246 family.

The sequence is that of UPF0246 protein NGO_0461 from Neisseria gonorrhoeae (strain ATCC 700825 / FA 1090).